We begin with the raw amino-acid sequence, 269 residues long: Phosphate import ATP-binding protein PstB (269 aa).

The ABC transporter domain maps to 23 to 264 (IATRNLEFYY…PSKQQTEDYI (242 aa)). 55 to 62 (GPSGCGKS) lines the ATP pocket.

The protein belongs to the ABC transporter superfamily. Phosphate importer (TC 3.A.1.7) family. In terms of assembly, the complex is composed of two ATP-binding proteins (PstB), two transmembrane proteins (PstC and PstA) and a solute-binding protein (PstS).

The protein resides in the cell inner membrane. It catalyses the reaction phosphate(out) + ATP + H2O = ADP + 2 phosphate(in) + H(+). Functionally, part of the ABC transporter complex PstSACB involved in phosphate import. Responsible for energy coupling to the transport system. This chain is Phosphate import ATP-binding protein PstB, found in Xylella fastidiosa (strain Temecula1 / ATCC 700964).